The following is a 601-amino-acid chain: Glutathione-regulated potassium-efflux system protein KefB (601 aa).

A run of 13 helical transmembrane segments spans residues 4–24, 29–49, 55–75, 87–107, 111–131, 152–172, 177–197, 207–227, 230–250, 262–282, 284–304, 324–344, and 356–376; these read ADLL…VPLA, IGAV…GLGF, EILH…GLEL, IFGV…GLLM, FLWQ…TAMA, VLLF…LLAG, HFDW…LIGG, FIAA…LVLS, LFMD…GVLL, AIDP…GMSL, LGVL…LVVI, MQFA…FSTA, and ALLL…MKGI. The RCK N-terminal domain maps to 400 to 519; that stretch reads KPQVIVVGFG…AGVTQFSRET (120 aa).

Belongs to the monovalent cation:proton antiporter 2 (CPA2) transporter (TC 2.A.37) family. KefB subfamily. In terms of assembly, interacts with the regulatory subunit KefG.

The protein resides in the cell inner membrane. In terms of biological role, pore-forming subunit of a potassium efflux system that confers protection against electrophiles. Catalyzes K(+)/H(+) antiport. In Salmonella newport (strain SL254), this protein is Glutathione-regulated potassium-efflux system protein KefB.